Consider the following 131-residue polypeptide: UPF0342 protein DSY1594 (131 aa).

It belongs to the UPF0342 family.

This is UPF0342 protein DSY1594 from Desulfitobacterium hafniense (strain Y51).